The primary structure comprises 197 residues: Peptide deformylase (197 aa).

2 residues coordinate Fe cation: C106 and H148. E149 is an active-site residue. Residue H152 participates in Fe cation binding.

Belongs to the polypeptide deformylase family. Fe(2+) is required as a cofactor.

The catalysed reaction is N-terminal N-formyl-L-methionyl-[peptide] + H2O = N-terminal L-methionyl-[peptide] + formate. Its function is as follows. Removes the formyl group from the N-terminal Met of newly synthesized proteins. Requires at least a dipeptide for an efficient rate of reaction. N-terminal L-methionine is a prerequisite for activity but the enzyme has broad specificity at other positions. The protein is Peptide deformylase of Mycobacterium sp. (strain JLS).